Consider the following 151-residue polypeptide: Ribosome-binding factor A (151 aa).

A disordered region spans residues 116–151 (DAEVARAAANARPAGDPDPYREPRPADDDDEDDEDE). Residues 120–129 (ARAAANARPA) are compositionally biased toward low complexity. The span at 142–151 (DDDDEDDEDE) shows a compositional bias: acidic residues.

It belongs to the RbfA family. Monomer. Binds 30S ribosomal subunits, but not 50S ribosomal subunits or 70S ribosomes.

The protein resides in the cytoplasm. In terms of biological role, one of several proteins that assist in the late maturation steps of the functional core of the 30S ribosomal subunit. Associates with free 30S ribosomal subunits (but not with 30S subunits that are part of 70S ribosomes or polysomes). Required for efficient processing of 16S rRNA. May interact with the 5'-terminal helix region of 16S rRNA. This is Ribosome-binding factor A from Thermobifida fusca (strain YX).